The following is a 278-amino-acid chain: HTH-type transcriptional activator RhaS (278 aa).

Positions 174–272 constitute an HTH araC/xylS-type domain; that stretch reads NLLLAWLEDH…NWSPRDIRQG (99 aa). 2 DNA-binding regions (H-T-H motif) span residues 191–212 and 239–262; these read DAVADQFSLSLRTLHRQLKQQT and VTDIAYRCGFSDSNHFSTLFRREF.

In terms of assembly, binds DNA as a dimer.

It localises to the cytoplasm. Its function is as follows. Activates expression of the rhaBAD and rhaT operons. The chain is HTH-type transcriptional activator RhaS from Escherichia coli O6:H1 (strain CFT073 / ATCC 700928 / UPEC).